We begin with the raw amino-acid sequence, 203 residues long: High frequency lysogenization protein HflD homolog (203 aa).

It belongs to the HflD family.

Its subcellular location is the cytoplasm. The protein resides in the cell inner membrane. The sequence is that of High frequency lysogenization protein HflD homolog from Histophilus somni (strain 2336) (Haemophilus somnus).